The primary structure comprises 616 residues: Dihydroxy-acid dehydratase (616 aa).

Residue Asp-81 participates in Mg(2+) binding. Cys-122 is a binding site for [2Fe-2S] cluster. Positions 123 and 124 each coordinate Mg(2+). Lys-124 bears the N6-carboxylysine mark. Cys-195 contributes to the [2Fe-2S] cluster binding site. Residue Glu-491 coordinates Mg(2+). Catalysis depends on Ser-517, which acts as the Proton acceptor.

Belongs to the IlvD/Edd family. Homodimer. [2Fe-2S] cluster serves as cofactor. Requires Mg(2+) as cofactor.

The catalysed reaction is (2R)-2,3-dihydroxy-3-methylbutanoate = 3-methyl-2-oxobutanoate + H2O. It catalyses the reaction (2R,3R)-2,3-dihydroxy-3-methylpentanoate = (S)-3-methyl-2-oxopentanoate + H2O. The protein operates within amino-acid biosynthesis; L-isoleucine biosynthesis; L-isoleucine from 2-oxobutanoate: step 3/4. It participates in amino-acid biosynthesis; L-valine biosynthesis; L-valine from pyruvate: step 3/4. Functionally, functions in the biosynthesis of branched-chain amino acids. Catalyzes the dehydration of (2R,3R)-2,3-dihydroxy-3-methylpentanoate (2,3-dihydroxy-3-methylvalerate) into 2-oxo-3-methylpentanoate (2-oxo-3-methylvalerate) and of (2R)-2,3-dihydroxy-3-methylbutanoate (2,3-dihydroxyisovalerate) into 2-oxo-3-methylbutanoate (2-oxoisovalerate), the penultimate precursor to L-isoleucine and L-valine, respectively. This is Dihydroxy-acid dehydratase from Yersinia pseudotuberculosis serotype O:1b (strain IP 31758).